We begin with the raw amino-acid sequence, 215 residues long: Protein FAM167A (215 aa).

Disordered stretches follow at residues 1-26 (MSVP…PPDD) and 63-109 (RPAA…LTTG). Residues 124-157 (LRKELAEMRLQDQQLARQLMRLRGDINKLKIEQT) adopt a coiled-coil conformation.

Belongs to the FAM167 (SEC) family.

The polypeptide is Protein FAM167A (Fam167a) (Mus musculus (Mouse)).